The primary structure comprises 811 residues: MIQRLGSSLVKFKSKIAGAIWRNLDDKLTEVVSLKDFGAKGDGKTNDQDAVNAAMASGKRIDGAGATYKVSSLPDMERFYNTRFVWERLAGQPLYYVSKGFINGELYKITDNPYYNAWPQDKAFVYENVIYAPYMGSDRHGVSRLHVSWVKSGDDGQTWSTPEWLTDMHPDYPTVNYHCMSMGVCRNRLFAMIETRTLAKNELTNCALWDRPMSRSLHLTGGITKAANQRYATIHVPDHGLFVGDFVNFSNSAVTGVSGDMKVATVIDKDNFTVLTPNQQTSDLNNAGKNWHMGTSFHKSPWRKTDLGLIPRVTEVHSFATIDNNGFVMGYHQGDVAPREVGLFYFPDAFNSPSNYVRRQIPSEYEPDAAEPCIKYYDGVLYLITRGTRGDRLGSSLHRSRDIGQTWESLRFPHNVHHTTLPFAKVGDDLIMFGSERAENEWEAGAPDDRYKASYPRTFYARLNVNNWNADDIEWVNITDQIYQGDIVNSSVGVGSVVVKDSFIYYIFGGENHFNPMTYGDNKDKDPFKGHGHPTDIYCYKMQIANDNRVSRKFTYGATPGQAIPTFMGTDGIRNIPAPLYFSDNIVTEDTKVGHLTLKASTSANIRSEMQMEGEYGFIGKSVPKDKPTGQRLIICGGEGTSSSSGAQITLHGSNSSNAKRITYNGNEHLFQGAPIMPAVDNQFAAGGPSNRFTTIYLGSDPVTTSDADHKYGISSINTKVLKAWSRVGFKQYGLNSEAERNLDSIHFGVLAQDIVAAFEAEGLDAIKYGIVSFEEGRYGVRYSEVLILEAAYTRHRLDKLEEMYATNKIS.

BNR repeat units lie at residues 150-161 (VKSGDDGQTWST) and 286-293 (NAGKNWHM). Active-site residues include glutamate 371 and arginine 386. One copy of the BNR 3 repeat lies at 398 to 409 (HRSRDIGQTWES). The active site involves arginine 437. A Peptidase S74 domain is found at 706 to 808 (SDADHKYGIS…DKLEEMYATN (103 aa)).

Belongs to the glycosyl hydrolase 58 family. As to quaternary structure, homotrimer. Interacts with sialic acid. Interacts with adapter protein gp37. Interacts with gp46. Post-translationally, the N-terminus is blocked. In terms of processing, proteolytic cleavage and release of the chaperone in the host cytosol stabilizes the folded protein. The cleavage gives rise to the mature tail spike protein but is not essential for catalytic activity. However, release of the chaperone domain confers kinetic stability and processivity to the endosialidase.

It localises to the virion. The enzyme catalyses Endohydrolysis of (2-&gt;8)-alpha-sialosyl linkages in oligo- or poly(sialic) acids.. In terms of biological role, receptor binding protein, which mediates the attachment to the host capsule. Degrades the alpha-2,8-linked polysialic acid K1-type capsule by cleaving within the polymer chain of polysialic acid. The C-terminal chaperone protein mediates homotrimerization and proper folding of the catalytic endosialidase trimer. The polypeptide is Tail spike protein (GP90) (Escherichia phage K1E (Bacteriophage K1E)).